The sequence spans 143 residues: MQEIEIFCDGSSLGNPGPGGYAAILRYKDKEKIISGGEKFTTNNRMELRALNEALKILKRPCHITLYSDSQYVCQAINVWLIGWQKKNFAKVKNVDLWKEFLEVSKGHSIVAIWIKGHNGHAQNERCDSLAKLEAQKWVKTTT.

Positions 1–136 constitute an RNase H type-1 domain; the sequence is MQEIEIFCDG…CDSLAKLEAQ (136 aa). 4 residues coordinate Mg(2+): Asp-9, Glu-47, Asp-69, and Asp-128.

Belongs to the RNase H family. As to quaternary structure, monomer. Requires Mg(2+) as cofactor.

The protein resides in the cytoplasm. It catalyses the reaction Endonucleolytic cleavage to 5'-phosphomonoester.. Endonuclease that specifically degrades the RNA of RNA-DNA hybrids. This chain is Ribonuclease H, found in Helicobacter acinonychis (strain Sheeba).